The sequence spans 66 residues: Conotoxin Lt3.5 (66 aa).

The signal sequence occupies residues 1 to 20 (MMSKLGALLTICLLLFPLTA). A propeptide spanning residues 21 to 53 (VPLDGDQPLDRHAERMHDGISPKRHPWFDPVKR) is cleaved from the precursor. 3 disulfides stabilise this stretch: Cys-54-Cys-66, Cys-55-Cys-62, and Cys-59-Cys-65. Pro-64 carries the post-translational modification 4-hydroxyproline.

Belongs to the conotoxin M superfamily. In terms of tissue distribution, expressed by the venom duct.

Its subcellular location is the secreted. In Conus litteratus (Lettered cone), this protein is Conotoxin Lt3.5.